The following is a 314-amino-acid chain: MPNLKGIRDRIQSVKNTKKITEAMRLVAAAKVRRAQEQVTSTRPFANTLLQVLYSLKSRLRLEEADLPLLKQREVKCVGLLVITGDRGLCGGYNANIIRKAERRAKELAAAGINYKFVLVGRKAVQYFQNRQAPVAKTYAGLEQIPSAAEASDIADELLSLFLSEEVDKIELIYTRFVSLISSQPVVQTLLPLVPEALTNPDDETFNLITRGGKFQVEREKVATEVKELPADMIFEQDPKDILNALLPLYLSNQLLRALQEGAASELAARMTAMNNASDNASDLMKTLTLSYNKARQAAITQELSEVVAGANAL.

This sequence belongs to the ATPase gamma chain family. As to quaternary structure, F-type ATPases have 2 components, CF(1) - the catalytic core - and CF(0) - the membrane proton channel. CF(1) has five subunits: alpha(3), beta(3), gamma(1), delta(1), epsilon(1). CF(0) has three main subunits: a, b and c.

The protein localises to the cellular thylakoid membrane. Its function is as follows. Produces ATP from ADP in the presence of a proton gradient across the membrane. The gamma chain is believed to be important in regulating ATPase activity and the flow of protons through the CF(0) complex. The protein is ATP synthase gamma chain of Picosynechococcus sp. (strain ATCC 27264 / PCC 7002 / PR-6) (Agmenellum quadruplicatum).